The sequence spans 234 residues: Probable pectate lyase F (234 aa).

The first 17 residues, 1 to 17 (MFSRIALLPAFLPVALA), serve as a signal peptide directing secretion. 2 N-linked (GlcNAc...) asparagine glycosylation sites follow: N168 and N194.

This sequence belongs to the polysaccharide lyase 3 family. Ca(2+) is required as a cofactor.

Its subcellular location is the secreted. It catalyses the reaction Eliminative cleavage of (1-&gt;4)-alpha-D-galacturonan to give oligosaccharides with 4-deoxy-alpha-D-galact-4-enuronosyl groups at their non-reducing ends.. In terms of biological role, pectinolytic enzyme consist of four classes of enzymes: pectin lyase, polygalacturonase, pectin methylesterase and rhamnogalacturonase. Among pectinolytic enzymes, pectin lyase is the most important in depolymerization of pectin, since it cleaves internal glycosidic bonds of highly methylated pectins. Favors pectate, the anion, over pectin, the methyl ester. In Aspergillus flavus (strain ATCC 200026 / FGSC A1120 / IAM 13836 / NRRL 3357 / JCM 12722 / SRRC 167), this protein is Probable pectate lyase F (plyF).